The primary structure comprises 472 residues: Eukaryotic translation initiation factor 2 subunit 3B (472 aa).

The residue at position 2 (alanine 2) is an N-acetylalanine. Serine 16 is subject to Phosphoserine. The 210-residue stretch at 39–248 folds into the tr-type G domain; the sequence is QATINIGTIG…IVKKIPVPPR (210 aa). Residues 48-55 are G1; that stretch reads GHVAHGKS. GTP is bound at residue 51 to 56; sequence AHGKST. The G2 stretch occupies residues 76-80; that stretch reads NITIK. The segment at 134–137 is G3; it reads DCPG. GTP-binding positions include 190–193 and 225–227; these read NKID and SAQ. The tract at residues 190–193 is G4; it reads NKID. A G5 region spans residues 225 to 227; sequence SAQ.

The protein belongs to the TRAFAC class translation factor GTPase superfamily. Classic translation factor GTPase family. EIF2G subfamily. In terms of assembly, eIF2 is a heterotrimer composed of an alpha, a beta and a gamma chain. eIF2 is member of the 43S pre-initiation complex (43S PIC). Specifically expressed in testis at the mRNA level.

The catalysed reaction is GTP + H2O = GDP + phosphate + H(+). Member of the eIF2 complex that functions in the early steps of protein synthesis by forming a ternary complex with GTP and initiator tRNA. This complex binds to a 40S ribosomal subunit, followed by mRNA binding to form the 43S pre-initiation complex (43S PIC). Junction of the 60S ribosomal subunit to form the 80S initiation complex is preceded by hydrolysis of the GTP bound to eIF2 and release of an eIF2-GDP binary complex. In order for eIF2 to recycle and catalyze another round of initiation, the GDP bound to eIF2 must exchange with GTP by way of a reaction catalyzed by eIF-2B. The polypeptide is Eukaryotic translation initiation factor 2 subunit 3B (Homo sapiens (Human)).